Here is a 141-residue protein sequence, read N- to C-terminus: UPF0310 protein Mflv_0785 (141 aa).

It belongs to the UPF0310 family.

This chain is UPF0310 protein Mflv_0785, found in Mycolicibacterium gilvum (strain PYR-GCK) (Mycobacterium gilvum (strain PYR-GCK)).